Here is a 1480-residue protein sequence, read N- to C-terminus: C-type mannose receptor 2 (1480 aa).

The signal sequence occupies residues 1–30; sequence MGPIRPALAPWPRHLLRCVLLLGGLRLGHP. Residues 31 to 1413 lie on the Extracellular side of the membrane; it reads ADSAAALLEP…SAALPENPVA (1383 aa). In terms of domain architecture, Ricin B-type lectin spans 40-166; that stretch reads PDVFLIFSQG…WNIYGSEEDL (127 aa). 2 cysteine pairs are disulfide-bonded: C53–C67 and C92–C111. 2 N-linked (GlcNAc...) asparagine glycosylation sites follow: N101 and N139. Residues 181–229 form the Fibronectin type-II domain; it reads SHGKPCTIPFKYDNQWFHGCTSTGREDGHLWCATTQDYGKDERWGFCPI. 4 cysteine pairs are disulfide-bonded: C186-C212, C200-C227, C265-C358, and C334-C350. Positions 243-359 constitute a C-type lectin 1 domain; that stretch reads LTDSCYQFNF…CSIALPYVCK (117 aa). N-linked (GlcNAc...) asparagine glycosylation is present at N363. C-type lectin domains lie at 388 to 504, 527 to 643, 677 to 808, 831 to 950, 978 to 1106, 1131 to 1242, and 1271 to 1391; these read FQGH…SICK, HSPS…RYIC, KLRH…WICK, FQEA…YICK, FLNK…GFIC, YLNR…GAVC, and FREH…GVVC. Cystine bridges form between C409–C503, C480–C495, C617–C634, C703–C807, C784–C799, C852–C949, and C926–C941. N1028 carries N-linked (GlcNAc...) asparagine glycosylation. A disulfide bond links C1077 and C1097. K1141 participates in a covalent cross-link: Glycyl lysine isopeptide (Lys-Gly) (interchain with G-Cter in SUMO1). Residues C1219 and C1233 are joined by a disulfide bond. The N-linked (GlcNAc...) asparagine glycan is linked to N1348. The cysteines at positions 1367 and 1382 are disulfide-linked. Residues 1414 to 1434 traverse the membrane as a helical segment; it reads LVVVLTAAVLLLLALLTGALI. Residues 1435–1480 are Cytoplasmic-facing; it reads LYRRRQSAERGSFEGARYSRSSRSGPAEATEKNILVSDMEMNEQQE. Residues 1446-1480 are disordered; that stretch reads SFEGARYSRSSRSGPAEATEKNILVSDMEMNEQQE.

In terms of assembly, interacts directly with PLAUR/UPAR and PLAU/pro-UPA to form a tri-molecular complex. Interacts with collagen V. Interacts with C-terminal region of type I collagen/COL1A1. Post-translationally, N-glycosylated. Phosphorylated.

It localises to the cell membrane. Functionally, may play a role as endocytotic lectin receptor displaying calcium-dependent lectin activity. Internalizes glycosylated ligands from the extracellular space for release in an endosomal compartment via clathrin-mediated endocytosis. May be involved in plasminogen activation system controlling the extracellular level of PLAUR/PLAU, and thus may regulate protease activity at the cell surface. May contribute to cellular uptake, remodeling and degradation of extracellular collagen matrices. May participate in remodeling of extracellular matrix cooperating with the matrix metalloproteinases (MMPs) secreted by hepatic stellate cells. May mediate endocytosis of partially degraded collagens and glycoproteins produced in the extracellular matrix by MMPs. This is C-type mannose receptor 2 (Mrc2) from Rattus norvegicus (Rat).